A 51-amino-acid chain; its full sequence is QKLCERPSGTWSGVCGNNNACKNQCINLEKARHGSCNYVFPAHKCICYFPC.

Glutamine 1 bears the Pyrrolidone carboxylic acid mark. 4 disulfide bridges follow: cysteine 4/cysteine 51, cysteine 15/cysteine 36, cysteine 21/cysteine 45, and cysteine 25/cysteine 47.

Forms oligomers in its native state.

Functionally, possesses antifungal activity sensitive to inorganic cations. This is Defensin-like protein 1 from Sinapis alba (White mustard).